The following is an 878-amino-acid chain: Longitudinals lacking protein, isoforms N/O/W/X/Y (878 aa).

Positions 32–97 (VDCTLAAEGK…MYRGEVNISQ (66 aa)) constitute a BTB domain. Disordered regions lie at residues 115–200 (LSDN…SSVL), 228–340 (SSGP…ASAS), and 542–583 (QIVK…QTHA). Low complexity-rich tracts occupy residues 162–175 (SGDVSGSREGSSSP), 228–251 (SSGPAAGTSSQASSTQQQQPLTST), 263–293 (TSSTAAPASGASASAAVQQAHLHQQQAQTTS), 329–340 (NSATGPNPASAS), and 546–569 (QQHQQQHQQQHQHPQQQHQPQQQQ). Residues 709–731 (YACNVCGKTYKIKGSLKRHKNYE) form a C2H2-type 1; degenerate zinc finger. The C2H2-type 2 zinc finger occupies 794 to 816 (FQCDFCLKWFKRRSHLNRHKKLH). The tract at residues 826–863 (SKQKPKTTSGQNLSHDANTDDEVATTNPAATEDESNYP) is disordered. Positions 831–841 (KTTSGQNLSHD) are enriched in polar residues.

By stage 11, isoform W, isoform X and isoform Y are expressed throughout the mesoderm, whereas isoform O is expressed in both mesoderm and ectoderm. From stage 15, expression of isoform O expands to all tissues, whereas expression of isoform W, isoform X and isoform Y becomes restricted during later stages; starting from stage 14 to 16, isoform W, isoform X and isoform Y are expressed in muscle. From stages 14 and 15, isoform W and isoform Y are expressed in the gut. For some isoforms, expression is also seen in specific types of cells in the embryo; isoform O is expressed in the ventral furrow at stage 5 and in the dorsal epidermis from stage 7. Isoform Y shows prominent expression in the gonad starting at stage 15.

It is found in the nucleus. Its function is as follows. Putative transcription factor required for axon growth and guidance in the central and peripheral nervous systems. Repels CNS axons away from the midline by promoting the expression of the midline repellent sli and its receptor robo. This chain is Longitudinals lacking protein, isoforms N/O/W/X/Y, found in Drosophila melanogaster (Fruit fly).